A 313-amino-acid polypeptide reads, in one-letter code: Adhesin MafA 2 (313 aa).

Residues 1–14 (MKTLLLLIPLVLTA) form the signal peptide. The N-palmitoyl cysteine moiety is linked to residue Cys15. Residue Cys15 is the site of S-diacylglycerol cysteine attachment. Residues 282–297 (GDTTAQNRPDFKQNNG) show a composition bias toward polar residues. The interval 282–313 (GDTTAQNRPDFKQNNGKKPDVGNEVIRRRKGG) is disordered.

It belongs to the MafA family.

It is found in the cell outer membrane. In Neisseria meningitidis serogroup A / serotype 4A (strain DSM 15465 / Z2491), this protein is Adhesin MafA 2 (mafA2).